The following is a 100-amino-acid chain: Protein RnfH (100 aa).

Belongs to the UPF0125 (RnfH) family.

This Pseudomonas paraeruginosa (strain DSM 24068 / PA7) (Pseudomonas aeruginosa (strain PA7)) protein is Protein RnfH.